The following is a 342-amino-acid chain: L-threonine 3-dehydrogenase (342 aa).

C38 provides a ligand contact to Zn(2+). Residues T40 and H43 each act as charge relay system in the active site. Zn(2+) is bound by residues H63, E64, C93, C96, C99, and C107. NAD(+) is bound by residues I175, D195, R200, L262–I264, and I286–Y287.

The protein belongs to the zinc-containing alcohol dehydrogenase family. As to quaternary structure, homotetramer. Requires Zn(2+) as cofactor.

Its subcellular location is the cytoplasm. It catalyses the reaction L-threonine + NAD(+) = (2S)-2-amino-3-oxobutanoate + NADH + H(+). It functions in the pathway amino-acid degradation; L-threonine degradation via oxydo-reductase pathway; glycine from L-threonine: step 1/2. Functionally, catalyzes the NAD(+)-dependent oxidation of L-threonine to 2-amino-3-ketobutyrate. In Burkholderia multivorans (strain ATCC 17616 / 249), this protein is L-threonine 3-dehydrogenase.